A 121-amino-acid chain; its full sequence is Large ribosomal subunit protein uL14 (121 aa).

The protein belongs to the universal ribosomal protein uL14 family. Part of the 50S ribosomal subunit. Forms a cluster with proteins L3 and L19. In the 70S ribosome, L14 and L19 interact and together make contacts with the 16S rRNA in bridges B5 and B8.

Binds to 23S rRNA. Forms part of two intersubunit bridges in the 70S ribosome. This chain is Large ribosomal subunit protein uL14, found in Synechococcus sp. (strain WH7803).